We begin with the raw amino-acid sequence, 537 residues long: MSNVSTSVTAQYQLNPAQNTGLVAAVRGSIVDLIFEQHVPPIHNVLYAQNKHVVLEVVAQLSAQKIRTIALTATQGLARGMPVEDSGGPLKVPVGPSTLSRMFNVFGAPIDGHTYQHDGKWRSVHQAPPALTKISSQLQIFETGIKIVDVLCPLERGGKAGLFGGAGVGKTVLLSEMIHNMVSQQQGVSIFCGIGERCREGEELYREMKEAGVLDNMVMLFGQMNEPPGSRFRIGHAALTMAEYFRDDEKKDVLLLIDNIFRFIQAGSEVSGLMGQMPSRMGYQPTLGTELAGLEERIANTEDGAVTSIQAVYVPADDFTDPAAVHTFSHLSATLVLSRKRASEGFYPAVDPLQSSSKLATPTVVGQRHYDVARQVKQILAQYNELKDIIAMLGLEQLSKKDRDVVSRARRLERFFTQPFFTTEQFTSMKGKFVSLEQALTGCERILQGEFDDYPESALYMIGEIDEAIKPKQSATEKNSSMNSDLKPSNSESNSPGPKNSEPDNAIPSSAKPNVSQPNTFKQDAQNESLEEPQNGR.

164–171 provides a ligand contact to ATP; the sequence is GGAGVGKT. The disordered stretch occupies residues 471–537; the sequence is PKQSATEKNS…ESLEEPQNGR (67 aa). Composition is skewed to polar residues over residues 473-498 and 507-528; these read QSATEKNSSMNSDLKPSNSESNSPGP and IPSSAKPNVSQPNTFKQDAQNE.

It belongs to the ATPase alpha/beta chains family. As to quaternary structure, F-type ATPases have 2 components, CF(1) - the catalytic core - and CF(0) - the membrane proton channel. CF(1) has five subunits: alpha(3), beta(3), gamma(1), delta(1), epsilon(1). CF(0) has three main subunits: a(1), b(2) and c(9-12). The alpha and beta chains form an alternating ring which encloses part of the gamma chain. CF(1) is attached to CF(0) by a central stalk formed by the gamma and epsilon chains, while a peripheral stalk is formed by the delta and b chains.

The protein resides in the cell inner membrane. It carries out the reaction ATP + H2O + 4 H(+)(in) = ADP + phosphate + 5 H(+)(out). In terms of biological role, produces ATP from ADP in the presence of a proton gradient across the membrane. The catalytic sites are hosted primarily by the beta subunits. In Pseudoalteromonas atlantica (strain T6c / ATCC BAA-1087), this protein is ATP synthase subunit beta 1.